The sequence spans 267 residues: Small ribosomal subunit protein uS2c (267 aa).

Residues 237–267 are disordered; it reads KQKIKKTGVKISGNRRTSSITKKRNPASSKI. A compositionally biased stretch (polar residues) spans 250-267; the sequence is NRRTSSITKKRNPASSKI.

Belongs to the universal ribosomal protein uS2 family.

It localises to the plastid. The protein localises to the chloroplast. The protein is Small ribosomal subunit protein uS2c (rps2) of Chlorella vulgaris (Green alga).